The sequence spans 297 residues: Thiosulfate sulfurtransferase (297 aa).

K14 is subject to N6-acetyllysine; alternate. The residue at position 14 (K14) is an N6-succinyllysine; alternate. The region spanning 25 to 143 is the Rhodanese 1 domain; the sequence is VGPSLRVLDA…WLKEGHPVTS (119 aa). S35 is a glycosylation site (O-linked (GlcNAc) serine). S38 is subject to Phosphoserine. The residue at position 136 (K136) is an N6-acetyllysine; alternate. Residue K136 is modified to N6-succinyllysine; alternate. A hinge region spans residues 144-159; the sequence is EPSRPEPAVFKATLNR. N6-acetyllysine is present on K163. The Rhodanese 2 domain occupies 173 to 288; it reads QSKRFQLVDS…WFRRAPPETR (116 aa). K175 bears the N6-acetyllysine; alternate mark. K175 bears the N6-succinyllysine; alternate mark. R187 contacts substrate. K224 carries the N6-acetyllysine; alternate modification. Residue K224 is modified to N6-succinyllysine; alternate. K236 carries the N6-acetyllysine modification. K237 bears the N6-acetyllysine; alternate mark. Residue K237 is modified to N6-succinyllysine; alternate. The active-site Cysteine persulfide intermediate is the C248. K250 is a binding site for substrate.

Monomer. In terms of tissue distribution, expressed in numerous tissues.

The protein resides in the mitochondrion matrix. It catalyses the reaction thiosulfate + hydrogen cyanide = thiocyanate + sulfite + 2 H(+). Its function is as follows. Together with MRPL18, acts as a mitochondrial import factor for the cytosolic 5S rRNA. Only the nascent unfolded cytoplasmic form is able to bind to the 5S rRNA. Involved in the formation of iron-sulfur complexes, cyanide detoxification or modification of sulfur-containing enzymes. Other thiol compounds, besides cyanide, can act as sulfur ion acceptors. Also has weak mercaptopyruvate sulfurtransferase (MST) activity. The sequence is that of Thiosulfate sulfurtransferase (Tst) from Rattus norvegicus (Rat).